Reading from the N-terminus, the 226-residue chain is 2,3-bisphosphoglycerate-dependent phosphoglycerate mutase (226 aa).

Residues 8–15 (RHGQSQWN), 21–22 (TG), R58, 112–115 (ERMY), K123, 139–140 (RR), and 183–184 (GN) contribute to the substrate site. Catalysis depends on H9, which acts as the Tele-phosphohistidine intermediate. E112 acts as the Proton donor/acceptor in catalysis.

It belongs to the phosphoglycerate mutase family. BPG-dependent PGAM subfamily.

The catalysed reaction is (2R)-2-phosphoglycerate = (2R)-3-phosphoglycerate. It functions in the pathway carbohydrate degradation; glycolysis; pyruvate from D-glyceraldehyde 3-phosphate: step 3/5. Catalyzes the interconversion of 2-phosphoglycerate and 3-phosphoglycerate. The protein is 2,3-bisphosphoglycerate-dependent phosphoglycerate mutase of Protochlamydia amoebophila (strain UWE25).